We begin with the raw amino-acid sequence, 216 residues long: Large ribosomal subunit protein uL24m (216 aa).

The N-terminal 9 residues, 1-9, are a transit peptide targeting the mitochondrion; that stretch reads MRLSALLAL. At Ser-24 the chain carries Phosphoserine. Residues 56–89 enclose the KOW domain; the sequence is LFCGDRVEILEGKDAGKQGKVVQVIRQRNWVVVE.

Belongs to the universal ribosomal protein uL24 family. As to quaternary structure, component of the mitochondrial ribosome large subunit (39S) which comprises a 16S rRNA and about 50 distinct proteins.

It localises to the mitochondrion. The chain is Large ribosomal subunit protein uL24m (MRPL24) from Bos taurus (Bovine).